We begin with the raw amino-acid sequence, 259 residues long: Deoxyribose-phosphate aldolase (259 aa).

The active-site Proton donor/acceptor is the Asp102. Lys166 (schiff-base intermediate with acetaldehyde) is an active-site residue. The active-site Proton donor/acceptor is Lys200.

Belongs to the DeoC/FbaB aldolase family. DeoC type 2 subfamily.

Its subcellular location is the cytoplasm. It catalyses the reaction 2-deoxy-D-ribose 5-phosphate = D-glyceraldehyde 3-phosphate + acetaldehyde. Its pathway is carbohydrate degradation; 2-deoxy-D-ribose 1-phosphate degradation; D-glyceraldehyde 3-phosphate and acetaldehyde from 2-deoxy-alpha-D-ribose 1-phosphate: step 2/2. Functionally, catalyzes a reversible aldol reaction between acetaldehyde and D-glyceraldehyde 3-phosphate to generate 2-deoxy-D-ribose 5-phosphate. The chain is Deoxyribose-phosphate aldolase from Vibrio cholerae serotype O1 (strain ATCC 39315 / El Tor Inaba N16961).